A 267-amino-acid chain; its full sequence is Diphthine--ammonia ligase (267 aa).

Tyrosine 97 carries the post-translational modification Phosphotyrosine.

This sequence belongs to the Diphthine--ammonia ligase family.

It catalyses the reaction diphthine-[translation elongation factor 2] + NH4(+) + ATP = diphthamide-[translation elongation factor 2] + AMP + diphosphate + H(+). It functions in the pathway protein modification; peptidyl-diphthamide biosynthesis. In terms of biological role, amidase that catalyzes the last step of diphthamide biosynthesis using ammonium and ATP. Diphthamide biosynthesis consists in the conversion of an L-histidine residue in the translation elongation factor 2 (EEF2) to diphthamide. This Mus musculus (Mouse) protein is Diphthine--ammonia ligase (Dph6).